The sequence spans 396 residues: MKVVLAYSGGLDTSAILVLLREQGHEVVTVTVSVGQEEDLEEVEERAYKLGASKHYTVNAVEEFAEKYISMAIKANALYEDKYPLGTALARPLIAEKVAEIARKESADAVAHGCTSKGNDQVRFDTMLKYYLGDDIKIIAPVRELRLTRAKAAEILRRNGFQPPGLHKTYSIDENLWSRSIEGGPLDDPMAEPPEDAFAWTVAPEKAPDQPLYLEIGFEKGIPVSINGEKMHLAKIVSLLNRLVGAYGYGRIDHIENRVVGLKSREVYEAPAALTLIEAHRDLEKTVYTPRELRFKRILDQEWSDLVYQGLWVEPLRATLEKAIDELNRWVTGTVRVKVYKGSLMVVGRWSPYSGYSREAIDYNHGWYPSDEEARGFITIWSLHSLAAAKARSLWG.

An ATP-binding site is contributed by 6-14; that stretch reads AYSGGLDTS. Y83 is an L-citrulline binding site. Position 113 (G113) interacts with ATP. L-aspartate contacts are provided by T115, N119, and D120. Position 119 (N119) interacts with L-citrulline. R123, S171, S180, E256, and Y268 together coordinate L-citrulline.

Belongs to the argininosuccinate synthase family. Type 1 subfamily. As to quaternary structure, homotetramer.

The protein resides in the cytoplasm. It catalyses the reaction L-citrulline + L-aspartate + ATP = 2-(N(omega)-L-arginino)succinate + AMP + diphosphate + H(+). It participates in amino-acid biosynthesis; L-arginine biosynthesis; L-arginine from L-ornithine and carbamoyl phosphate: step 2/3. This chain is Argininosuccinate synthase, found in Hyperthermus butylicus (strain DSM 5456 / JCM 9403 / PLM1-5).